We begin with the raw amino-acid sequence, 930 residues long: Zn(2)-C6 fungal-type transcription factor FTF1c (930 aa).

The segment at residues 137–164 (CIACRRKKIRCSGEKPACEHCLCSYIPC) is a DNA-binding region (zn(2)-C6 fungal-type).

Its subcellular location is the nucleus. Its function is as follows. Zn(2)-C6 fungal-type transcription factor that has a role in the establishment of the fungus within the plant and/or the progress of the disease. Regulates the expression of virulence factors such as SIX1 and SIX6. This chain is Zn(2)-C6 fungal-type transcription factor FTF1c, found in Fusarium oxysporum f. sp. lycopersici (strain 4287 / CBS 123668 / FGSC 9935 / NRRL 34936) (Fusarium vascular wilt of tomato).